Here is a 468-residue protein sequence, read N- to C-terminus: 3-isopropylmalate dehydratase large subunit (468 aa).

Positions 349, 409, and 412 each coordinate [4Fe-4S] cluster.

This sequence belongs to the aconitase/IPM isomerase family. LeuC type 1 subfamily. Heterodimer of LeuC and LeuD. Requires [4Fe-4S] cluster as cofactor.

It catalyses the reaction (2R,3S)-3-isopropylmalate = (2S)-2-isopropylmalate. The protein operates within amino-acid biosynthesis; L-leucine biosynthesis; L-leucine from 3-methyl-2-oxobutanoate: step 2/4. Its function is as follows. Catalyzes the isomerization between 2-isopropylmalate and 3-isopropylmalate, via the formation of 2-isopropylmaleate. This Shewanella baltica (strain OS223) protein is 3-isopropylmalate dehydratase large subunit.